The following is a 122-amino-acid chain: MQKKDRRKSFYRGIRSEKWAAWWLRLKGFRIVARRFKTKSGEIDLIARRGNLVLIVEVKARATLADAMVAVCRMNERRIEAAADIWLAQQKDYSALCVRFDFIAILPWRLPHHIQRFFESHQ.

It belongs to the UPF0102 family.

The chain is UPF0102 protein BARBAKC583_1042 from Bartonella bacilliformis (strain ATCC 35685 / KC583 / Herrer 020/F12,63).